Consider the following 192-residue polypeptide: Probable nicotinate-nucleotide adenylyltransferase (192 aa).

Belongs to the NadD family.

The catalysed reaction is nicotinate beta-D-ribonucleotide + ATP + H(+) = deamido-NAD(+) + diphosphate. Its pathway is cofactor biosynthesis; NAD(+) biosynthesis; deamido-NAD(+) from nicotinate D-ribonucleotide: step 1/1. Catalyzes the reversible adenylation of nicotinate mononucleotide (NaMN) to nicotinic acid adenine dinucleotide (NaAD). The sequence is that of Probable nicotinate-nucleotide adenylyltransferase from Staphylococcus haemolyticus (strain JCSC1435).